A 290-amino-acid chain; its full sequence is Protease HtpX homolog (290 aa).

A run of 2 helical transmembrane segments spans residues M5 to F27 and V32 to S51. H133 serves as a coordination point for Zn(2+). E134 is an active-site residue. H137 is a Zn(2+) binding site. Helical transmembrane passes span I143–A163 and I182–A202. Residue E208 participates in Zn(2+) binding.

This sequence belongs to the peptidase M48B family. It depends on Zn(2+) as a cofactor.

The protein resides in the cell membrane. This Thermococcus kodakarensis (strain ATCC BAA-918 / JCM 12380 / KOD1) (Pyrococcus kodakaraensis (strain KOD1)) protein is Protease HtpX homolog.